Consider the following 648-residue polypeptide: Probable potassium transport system protein Kup 1 (648 aa).

The interval methionine 1–histidine 31 is disordered. The segment covering glycine 10–glutamine 26 has biased composition (low complexity). 12 helical membrane-spanning segments follow: residues leucine 39 to leucine 59, leucine 73 to phenylalanine 93, isoleucine 130 to alanine 150, proline 165 to isoleucine 185, valine 193 to alanine 213, phenylalanine 243 to methionine 263, tryptophan 275 to isoleucine 295, leucine 317 to phenylalanine 337, isoleucine 364 to phenylalanine 384, tyrosine 394 to phenylalanine 414, alanine 421 to alanine 441, and isoleucine 446 to threonine 466.

The protein belongs to the HAK/KUP transporter (TC 2.A.72) family.

Its subcellular location is the cell inner membrane. The catalysed reaction is K(+)(in) + H(+)(in) = K(+)(out) + H(+)(out). Functionally, transport of potassium into the cell. Likely operates as a K(+):H(+) symporter. In Novosphingobium aromaticivorans (strain ATCC 700278 / DSM 12444 / CCUG 56034 / CIP 105152 / NBRC 16084 / F199), this protein is Probable potassium transport system protein Kup 1.